Consider the following 515-residue polypeptide: AAA ATPase forming ring-shaped complexes (515 aa).

The stretch at 2 to 49 (NDHDEETLASLQQANDQLMAKNHALVKALSRATQEMTKTKAQLNQLAG) forms a coiled coil. 240–245 (GNGKTL) lines the ATP pocket.

The protein belongs to the AAA ATPase family. In terms of assembly, homohexamer. Assembles into a hexameric ring structure.

This is AAA ATPase forming ring-shaped complexes from Bifidobacterium adolescentis (strain ATCC 15703 / DSM 20083 / NCTC 11814 / E194a).